Consider the following 404-residue polypeptide: Calcium/calmodulin-dependent protein kinase cmkB (404 aa).

The 262-residue stretch at 18–279 (YKTGKTLGAG…AHQALQHPWI (262 aa)) folds into the Protein kinase domain. ATP is bound by residues 24–32 (LGAGLYSVV) and K47. The Proton acceptor role is filled by D141. T179 carries the phosphothreonine; by cmkC modification. Residues 279–322 (INPPYDTTDDLGSGEDLLPNIKKNFNARRTLHKAIDTVRAINKL) are autoinhibitory domain. The interval 301–323 (KNFNARRTLHKAIDTVRAINKLR) is calmodulin-binding. The disordered stretch occupies residues 336–404 (VDPKPEHVNG…WSRTAPRSER (69 aa)). 2 stretches are compositionally biased toward basic and acidic residues: residues 338–370 (PKPEHVNGSEVVEDRTTPRERENEDAMEIDSRS) and 379–389 (QIREQERKVKE).

It belongs to the protein kinase superfamily. CAMK Ser/Thr protein kinase family. CaMK subfamily. In terms of processing, phosphorylated by cmkC on Thr-179.

It carries out the reaction L-seryl-[protein] + ATP = O-phospho-L-seryl-[protein] + ADP + H(+). The catalysed reaction is L-threonyl-[protein] + ATP = O-phospho-L-threonyl-[protein] + ADP + H(+). Activated by Ca(2+)/calmodulin. Binding of calmodulin results in conformational change that relieves intrasteric autoinhibition and allows phosphorylation of Thr-179 within the activation loop by cmkC. Calcium/calmodulin-dependent protein kinase that operates in the calcium-triggered CaMKK-CaMK1 signaling cascade. Required in G1-phase of the cell cycle for proper timing of the initial nuclear division after germination, but not for subsequent mitoses. Required for the normal temporal regulation of nimX activity. This is Calcium/calmodulin-dependent protein kinase cmkB from Emericella nidulans (Aspergillus nidulans).